Here is a 194-residue protein sequence, read N- to C-terminus: Oligoribonuclease (194 aa).

One can recognise an Exonuclease domain in the interval 11–174 (LIWIDLEMTG…SDVRDSINEL (164 aa)). The active site involves Tyr132.

It belongs to the oligoribonuclease family.

It is found in the cytoplasm. Functionally, 3'-to-5' exoribonuclease specific for small oligoribonucleotides. In Xanthomonas oryzae pv. oryzae (strain MAFF 311018), this protein is Oligoribonuclease.